Consider the following 310-residue polypeptide: ADP-L-glycero-D-manno-heptose-6-epimerase (310 aa).

Residues 10–11 (FI), 31–32 (DN), Lys-38, Lys-53, 75–79 (EGACS), and Asn-92 contribute to the NADP(+) site. Tyr-140 (proton acceptor) is an active-site residue. Lys-144 serves as a coordination point for NADP(+). Residue Asn-169 participates in substrate binding. NADP(+)-binding residues include Val-170 and Lys-178. The active-site Proton acceptor is the Lys-178. Substrate-binding positions include Ser-180, His-187, 201–204 (FEGS), Arg-209, and Tyr-272.

It belongs to the NAD(P)-dependent epimerase/dehydratase family. HldD subfamily. As to quaternary structure, homopentamer. NADP(+) is required as a cofactor.

The enzyme catalyses ADP-D-glycero-beta-D-manno-heptose = ADP-L-glycero-beta-D-manno-heptose. It functions in the pathway nucleotide-sugar biosynthesis; ADP-L-glycero-beta-D-manno-heptose biosynthesis; ADP-L-glycero-beta-D-manno-heptose from D-glycero-beta-D-manno-heptose 7-phosphate: step 4/4. In terms of biological role, catalyzes the interconversion between ADP-D-glycero-beta-D-manno-heptose and ADP-L-glycero-beta-D-manno-heptose via an epimerization at carbon 6 of the heptose. In Salmonella heidelberg (strain SL476), this protein is ADP-L-glycero-D-manno-heptose-6-epimerase.